A 235-amino-acid chain; its full sequence is Large ribosomal subunit protein uL1 (235 aa).

The protein belongs to the universal ribosomal protein uL1 family. As to quaternary structure, part of the 50S ribosomal subunit.

Functionally, binds directly to 23S rRNA. The L1 stalk is quite mobile in the ribosome, and is involved in E site tRNA release. Protein L1 is also a translational repressor protein, it controls the translation of the L11 operon by binding to its mRNA. This is Large ribosomal subunit protein uL1 from Methylobacterium sp. (strain 4-46).